The sequence spans 409 residues: Serine/threonine transporter SstT (409 aa).

Helical transmembrane passes span 15 to 35 (LSLV…ALLA), 49 to 69 (FVSA…MASI), 82 to 102 (PILV…VIAS), 142 to 162 (ALMN…GVAI), 193 to 213 (LGIF…ALLG), 218 to 238 (LAVL…LIVF), 301 to 321 (GAAI…GIAV), 331 to 351 (VVAA…LLLI), and 357 to 377 (LFGI…IIGV).

Belongs to the dicarboxylate/amino acid:cation symporter (DAACS) (TC 2.A.23) family.

The protein localises to the cell inner membrane. It catalyses the reaction L-serine(in) + Na(+)(in) = L-serine(out) + Na(+)(out). The enzyme catalyses L-threonine(in) + Na(+)(in) = L-threonine(out) + Na(+)(out). In terms of biological role, involved in the import of serine and threonine into the cell, with the concomitant import of sodium (symport system). The protein is Serine/threonine transporter SstT of Pseudomonas fluorescens (strain ATCC BAA-477 / NRRL B-23932 / Pf-5).